Here is an 86-residue protein sequence, read N- to C-terminus: Large ribosomal subunit protein bL27 (86 aa).

Residues 1–10 (MAQKKGGGST) show a composition bias toward gly residues. The tract at residues 1 to 21 (MAQKKGGGSTRNGRDSESKRL) is disordered.

Belongs to the bacterial ribosomal protein bL27 family.

The protein is Large ribosomal subunit protein bL27 of Cupriavidus pinatubonensis (strain JMP 134 / LMG 1197) (Cupriavidus necator (strain JMP 134)).